A 534-amino-acid chain; its full sequence is Transcription factor RBF1 (534 aa).

A disordered region spans residues 1-36; the sequence is MSSNKNQSDLNIPTNSASLKQKQRQQLGIKSEIGAS. The stretch at 77–147 forms a coiled coil; that stretch reads AAAAELQHRA…YQQQQQLHQL (71 aa). 4 disordered regions span residues 262-285, 353-372, 402-439, and 477-534; these read ANLY…HNEE, QQQQ…QQAA, QLSQ…PHGL, and TQGN…SGFL. A compositionally biased stretch (basic and acidic residues) spans 267-285; sequence NEKDQKRKNKPDEPGHNEE. Residues 332–386 adopt a coiled-coil conformation; sequence HHLLQQEQQQQQQQQQQQQQQQQQQQQQQHNANSQAQQQAAQLQQQMQQQLQASG. Residues 402 to 435 show a composition bias toward low complexity; sequence QLSQQQSQQQQLHHIPQQRQRTQSQQSQQQPQQT.

This sequence belongs to the RBF1 family.

The protein resides in the nucleus. It is found in the chromosome. The protein localises to the telomere. Functionally, transcriptional activator that binds to the RPG box and to telomeres. Involved in the regulation of the transition between yeast and filamentous forms and plays a role in virulence. Induces expression of HWP1, a major hyphal cell protein and virulence factor. This Candida albicans (strain SC5314 / ATCC MYA-2876) (Yeast) protein is Transcription factor RBF1 (RBF1).